The chain runs to 467 residues: Sialic acid-binding Ig-like lectin 12 (467 aa).

The first 18 residues, 1–18 (MLLLLLLLLLWGIKGVEG), serve as a signal peptide directing secretion. Topologically, residues 19 to 353 (QNPQEVFTLN…ATLSEMMMGT (335 aa)) are extracellular. Residues 21–141 (PQEVFTLNVE…TKYNYMWDKM (121 aa)) enclose the Ig-like V-type domain. 3 disulfides stabilise this stretch: C40-C176, C45-C108, and C170-C219. N-linked (GlcNAc...) asparagine glycosylation is present at N46. R126 is a binding site for N-acetylneuraminate. 2 Ig-like C2-type domains span residues 152-239 (PQIL…LNVS) and 242-339 (PKNL…LSLS). N-linked (GlcNAc...) asparagine glycosylation is found at N167, N197, N216, N227, N237, N244, N262, N287, and N294. The cysteines at positions 278 and 323 are disulfide-linked. The helical transmembrane segment at 354–374 (FVGSGVTALLFLSVCILLLAV) threads the bilayer. Over 375 to 467 (RSYRRKPARP…IKFPQRTAWP (93 aa)) the chain is Cytoplasmic. The short motif at 430 to 435 (IHYATL) is the ITIM motif element. A phosphotyrosine mark is found at Y432 and Y455. The short motif at 453-458 (TEYSEI) is the SLAM-like motif element.

Belongs to the immunoglobulin superfamily. SIGLEC (sialic acid binding Ig-like lectin) family. Homodimer; disulfide-linked. Interacts with PTPN6/SHP-1 and PTPN11/SHP-2 upon phosphorylation. In terms of processing, phosphorylation of Tyr-432 is required for binding to PTPN6 and PTPN11. Phosphorylation of Tyr-455 is involved in binding to PTPN6. Tyr-432 needs to be phosphorylated prior to Tyr-455. Expressed by monocytic/myeloid lineage cells. Found at higher levels in spleen, liver and heart. Found at lower levels in kidney and lung.

It is found in the membrane. In terms of biological role, putative adhesion molecule that mediates sialic-acid dependent binding to cells. The sialic acid recognition site may be masked by cis interactions with sialic acids on the same cell surface. In the immune response, may act as an inhibitory receptor upon ligand induced tyrosine phosphorylation by recruiting cytoplasmic phosphatase(s) via their SH2 domain(s) that block signal transduction through dephosphorylation of signaling molecules. The chain is Sialic acid-binding Ig-like lectin 12 (Siglec12) from Mus musculus (Mouse).